The sequence spans 347 residues: MDRMLETSETFSISGIIENEIEQRESFINDTSKIVELLFKQFNITQQQQQNNENKLINETFSMVFQLFKEMLSPLYSLVNEDMMPNIFELYQMTEDLRYYFALFNGDIKNKLKNITTTTKDLRICNNKKELIKELIKNQYDIDRKPIDQQSISNLRKEEKEKQKENENENENENENENENEKENQELDKKVNQTNDNEKDGDENENEIKDCFFLLFQLFTSIVYNLQSNCEKLLLQSIDISKNNFKRQFYNHLIKRDLNYLENLTFRLNLINDLNKKEEEKEKEKEKEKEENSFDTFSKLFLNDKQQKENTNNIINNNLLESFQIIFSNYIEKNNLNVDLILESFNN.

2 coiled-coil regions span residues 148-201 and 261-298; these read DQQS…EKDG and LENL…DTFS. The interval 151–203 is disordered; sequence SISNLRKEEKEKQKENENENENENENENENEKENQELDKKVNQTNDNEKDGDE. Positions 155 to 167 are enriched in basic and acidic residues; the sequence is LRKEEKEKQKENE. Residues 168-178 are compositionally biased toward acidic residues; it reads NENENENENEN. A compositionally biased stretch (basic and acidic residues) spans 179–191; it reads ENEKENQELDKKV.

This is an uncharacterized protein from Dictyostelium discoideum (Social amoeba).